The chain runs to 103 residues: Putative truncated guanine nucleotide exchange factor YLL017W (103 aa).

Positions 26 to 97 (QPIDVVECTY…PPSFYTVHSK (72 aa)) constitute an SH3 domain.

The polypeptide is Putative truncated guanine nucleotide exchange factor YLL017W (Saccharomyces cerevisiae (strain ATCC 204508 / S288c) (Baker's yeast)).